A 198-amino-acid polypeptide reads, in one-letter code: FMN-dependent NADH:quinone oxidoreductase (198 aa).

Residues serine 10, 16-18 (SQS), 94-97 (MYNF), and 138-141 (TRGG) contribute to the FMN site.

The protein belongs to the azoreductase type 1 family. Homodimer. Requires FMN as cofactor.

The enzyme catalyses 2 a quinone + NADH + H(+) = 2 a 1,4-benzosemiquinone + NAD(+). The catalysed reaction is N,N-dimethyl-1,4-phenylenediamine + anthranilate + 2 NAD(+) = 2-(4-dimethylaminophenyl)diazenylbenzoate + 2 NADH + 2 H(+). Its function is as follows. Quinone reductase that provides resistance to thiol-specific stress caused by electrophilic quinones. In terms of biological role, also exhibits azoreductase activity. Catalyzes the reductive cleavage of the azo bond in aromatic azo compounds to the corresponding amines. This is FMN-dependent NADH:quinone oxidoreductase from Shewanella baltica (strain OS185).